Reading from the N-terminus, the 41-residue chain is Large ribosomal subunit protein bL36 (41 aa).

Belongs to the bacterial ribosomal protein bL36 family.

The chain is Large ribosomal subunit protein bL36 from Nitrobacter winogradskyi (strain ATCC 25391 / DSM 10237 / CIP 104748 / NCIMB 11846 / Nb-255).